Here is a 117-residue protein sequence, read N- to C-terminus: Fluoride-specific ion channel FluC 2 (117 aa).

Transmembrane regions (helical) follow at residues 1–21 and 46–66; these read MISIILVMIGGGLGAIARSAI and FLIGLTIGLSISISWFPAFFV. 2 residues coordinate Na(+): Gly71 and Thr74. A helical transmembrane segment spans residues 95 to 115; it reads LFLNYSLLQFIIGFIACYIGY.

Belongs to the fluoride channel Fluc/FEX (TC 1.A.43) family.

The protein resides in the cell membrane. The catalysed reaction is fluoride(in) = fluoride(out). Na(+) is not transported, but it plays an essential structural role and its presence is essential for fluoride channel function. In terms of biological role, fluoride-specific ion channel. Important for reducing fluoride concentration in the cell, thus reducing its toxicity. In Staphylococcus aureus (strain MRSA252), this protein is Fluoride-specific ion channel FluC 2.